A 108-amino-acid polypeptide reads, in one-letter code: Nucleoid-associated protein HCH_02614 (108 aa).

This sequence belongs to the YbaB/EbfC family. In terms of assembly, homodimer.

It localises to the cytoplasm. Its subcellular location is the nucleoid. In terms of biological role, binds to DNA and alters its conformation. May be involved in regulation of gene expression, nucleoid organization and DNA protection. The protein is Nucleoid-associated protein HCH_02614 of Hahella chejuensis (strain KCTC 2396).